The sequence spans 220 residues: Small ribosomal subunit protein eS1 (220 aa).

This sequence belongs to the eukaryotic ribosomal protein eS1 family.

The protein is Small ribosomal subunit protein eS1 of Methanococcus vannielii (strain ATCC 35089 / DSM 1224 / JCM 13029 / OCM 148 / SB).